A 339-amino-acid polypeptide reads, in one-letter code: Deoxyguanosinetriphosphate triphosphohydrolase-like protein (339 aa).

Residues 75 to 186 (RLTHTLEVAQ…VQISDKIAYI (112 aa)) enclose the HD domain.

The protein belongs to the dGTPase family. Type 2 subfamily.

This chain is Deoxyguanosinetriphosphate triphosphohydrolase-like protein, found in Caldanaerobacter subterraneus subsp. tengcongensis (strain DSM 15242 / JCM 11007 / NBRC 100824 / MB4) (Thermoanaerobacter tengcongensis).